The chain runs to 765 residues: Protein transport protein Sec23A (765 aa).

4 residues coordinate Zn(2+): cysteine 61, cysteine 66, cysteine 85, and cysteine 88. The Gelsolin-like repeat unit spans residues 632 to 718; that stretch reads PEPVLLDSSS…EHGGSQARFL (87 aa).

The protein belongs to the SEC23/SEC24 family. SEC23 subfamily. COPII is composed of at least five proteins: the Sec23/24 complex, the Sec13/31 complex and Sar1.

The protein resides in the cytoplasmic vesicle. It is found in the COPII-coated vesicle membrane. Its subcellular location is the endoplasmic reticulum membrane. It localises to the cytoplasm. The protein localises to the cytosol. Component of the coat protein complex II (COPII) which promotes the formation of transport vesicles from the endoplasmic reticulum (ER). The coat has two main functions, the physical deformation of the endoplasmic reticulum membrane into vesicles and the selection of cargo molecules for their transport to the Golgi complex. This Danio rerio (Zebrafish) protein is Protein transport protein Sec23A.